Here is a 393-residue protein sequence, read N- to C-terminus: Phosphoglycerate kinase (393 aa).

Substrate is bound by residues aspartate 21–asparagine 23, histidine 59–arginine 62, arginine 118, and arginine 151. ATP is bound by residues lysine 201, glutamate 323, and glycine 349–threonine 352.

Belongs to the phosphoglycerate kinase family. Monomer.

It is found in the cytoplasm. The catalysed reaction is (2R)-3-phosphoglycerate + ATP = (2R)-3-phospho-glyceroyl phosphate + ADP. It participates in carbohydrate degradation; glycolysis; pyruvate from D-glyceraldehyde 3-phosphate: step 2/5. This is Phosphoglycerate kinase from Pelotomaculum thermopropionicum (strain DSM 13744 / JCM 10971 / SI).